Here is a 246-residue protein sequence, read N- to C-terminus: Probable septum site-determining protein MinC (246 aa).

It belongs to the MinC family. Interacts with MinD and FtsZ.

Functionally, cell division inhibitor that blocks the formation of polar Z ring septums. Rapidly oscillates between the poles of the cell to destabilize FtsZ filaments that have formed before they mature into polar Z rings. Prevents FtsZ polymerization. This chain is Probable septum site-determining protein MinC, found in Pseudomonas syringae pv. syringae (strain B728a).